The chain runs to 1859 residues: DNA-directed RNA polymerase subunit beta'' (1859 aa).

Residues cysteine 286, cysteine 359, cysteine 366, and cysteine 369 each contribute to the Zn(2+) site.

The protein belongs to the RNA polymerase beta' chain family. RpoC2 subfamily. In terms of assembly, in plastids the minimal PEP RNA polymerase catalytic core is composed of four subunits: alpha, beta, beta', and beta''. When a (nuclear-encoded) sigma factor is associated with the core the holoenzyme is formed, which can initiate transcription. The cofactor is Zn(2+).

It is found in the plastid. Its subcellular location is the chloroplast. The catalysed reaction is RNA(n) + a ribonucleoside 5'-triphosphate = RNA(n+1) + diphosphate. Functionally, DNA-dependent RNA polymerase catalyzes the transcription of DNA into RNA using the four ribonucleoside triphosphates as substrates. This is DNA-directed RNA polymerase subunit beta'' from Oltmannsiellopsis viridis (Marine flagellate).